We begin with the raw amino-acid sequence, 92 residues long: Small ribosomal subunit protein uS19 (92 aa).

It belongs to the universal ribosomal protein uS19 family.

Functionally, protein S19 forms a complex with S13 that binds strongly to the 16S ribosomal RNA. The polypeptide is Small ribosomal subunit protein uS19 (Shewanella amazonensis (strain ATCC BAA-1098 / SB2B)).